Consider the following 234-residue polypeptide: 7-carboxy-7-deazaguanine synthase (234 aa).

Substrate-binding positions include 36-38 (IQG) and arginine 51. The region spanning 42–234 (FVGYPSIFIR…LQTHKFLGIE (193 aa)) is the Radical SAM core domain. [4Fe-4S] cluster-binding residues include cysteine 55, cysteine 59, and cysteine 62. A Mg(2+)-binding site is contributed by threonine 64. A substrate-binding site is contributed by threonine 100. S-adenosyl-L-methionine-binding positions include glycine 102, 144 to 146 (SPK), and 195 to 198 (QSMD).

It belongs to the radical SAM superfamily. 7-carboxy-7-deazaguanine synthase family. In terms of assembly, homodimer. Requires [4Fe-4S] cluster as cofactor. S-adenosyl-L-methionine serves as cofactor. It depends on Mg(2+) as a cofactor.

The enzyme catalyses 6-carboxy-5,6,7,8-tetrahydropterin + H(+) = 7-carboxy-7-deazaguanine + NH4(+). It participates in purine metabolism; 7-cyano-7-deazaguanine biosynthesis. Catalyzes the complex heterocyclic radical-mediated conversion of 6-carboxy-5,6,7,8-tetrahydropterin (CPH4) to 7-carboxy-7-deazaguanine (CDG), a step common to the biosynthetic pathways of all 7-deazapurine-containing compounds. The sequence is that of 7-carboxy-7-deazaguanine synthase from Rickettsia prowazekii (strain Madrid E).